Here is a 761-residue protein sequence, read N- to C-terminus: Protein ACTIVITY OF BC1 COMPLEX KINASE 8, chloroplastic (761 aa).

Residues 1 to 57 constitute a chloroplast transit peptide; sequence MATSSSSSSSLLLPNINFNSRQSPTITRSVSIAGIFLPRNRLSYNHNLRIRTRLIRA. Residues 288-648 form the Protein kinase domain; that stretch reads RFDYEPIAAA…VKDLRKRWDR (361 aa). Residues 294–302 and K315 each bind ATP; that span reads IAAASLGQV. The Proton acceptor role is filled by D452. Residues 725 to 745 form a helical membrane-spanning segment; sequence PATIAYTVCAFFSLQVLIGII.

It belongs to the protein kinase superfamily. ADCK protein kinase family. As to expression, mostly expressed in leaves and flowers, and, to a lower extent, in stems, siliques and roots.

The protein resides in the plastid. It is found in the chloroplast envelope. Its subcellular location is the chloroplast membrane. It catalyses the reaction L-seryl-[protein] + ATP = O-phospho-L-seryl-[protein] + ADP + H(+). It carries out the reaction L-threonyl-[protein] + ATP = O-phospho-L-threonyl-[protein] + ADP + H(+). Its function is as follows. Involved in resistance to oxidative stress (e.g. hydrogen peroxide H(2)O(2)), high light and heavy metals (e.g. cadmium ions Cd(2+)). Influences responses to reactive oxygen species (ROS) production. Together with SIA1, regulates iron distribution within the chloroplast and mediates the oxidative stress response. Together with ABC1K7, influences chloroplast lipid synthesis/accumulation and modulates chloroplast membrane composition in response to stress. The polypeptide is Protein ACTIVITY OF BC1 COMPLEX KINASE 8, chloroplastic (Arabidopsis thaliana (Mouse-ear cress)).